The following is an 826-amino-acid chain: U4/U6 snRNA-associated-splicing factor PRP24 (826 aa).

4 consecutive RRM domains span residues 310–385 (TSVF…EAAG), 386–463 (ITLY…YSDP), 477–554 (REVH…LSVS), and 598–670 (RSFA…AVPQ).

Its subcellular location is the nucleus. Functions as a recycling factor of the spliceosome, a machinery that forms on each precursor-messenger RNA (pre-mRNA) and catalyzes the removal of introns. Chaperones the re-annealing of U4 and U6 snRNAs (small nuclear RNAs) released from previous rounds of splicing, an initial step in reforming the U4/U6-U5 tri-snRNP (small nuclear ribonucleoprotein) that can reassemble into another spliceosome complex; this step involves binding U6 and facilitating the unwinding of the U6 internal stem loop, followed by base-pairing of U6 to U4. This is U4/U6 snRNA-associated-splicing factor PRP24 from Ophiostoma ulmi (Dutch elm disease fungus).